A 46-amino-acid polypeptide reads, in one-letter code: Cystatin WCPI-3 (46 aa).

The Secondary area of contact signature appears at 35 to 38 (VVAG).

The protein belongs to the cystatin family. Phytocystatin subfamily.

In terms of biological role, inhibitor of papain. This chain is Cystatin WCPI-3, found in Wisteria floribunda (Japanese wisteria).